Here is a 277-residue protein sequence, read N- to C-terminus: GPALPP motifs-containing protein 1 (277 aa).

The disordered stretch occupies residues 1 to 240 (MARDLIGPAL…VWTDTPADRE (240 aa)). The residue at position 2 (alanine 2) is an N-acetylalanine. A GPALPP motif 1 motif is present at residues 7–12 (GPALPP). Phosphoserine is present on serine 28. The GPALPP motif 2 signature appears at 32–37 (GPALPP). 2 stretches are compositionally biased toward acidic residues: residues 60 to 69 (GNQESEEDDT) and 81 to 90 (DDDDDDDDEG). The GPALPP motif 3 motif lies at 93 to 98 (GPALPP). Serine 106 bears the Phosphoserine mark. A compositionally biased stretch (pro residues) spans 108–117 (PRPMIGPALP). The GPALPP motif 4 motif lies at 113–118 (GPALPP). A phosphoserine mark is found at serine 138 and serine 143. Threonine 147 carries the phosphothreonine modification. Serine 149 and serine 150 each carry phosphoserine. Basic and acidic residues predominate over residues 172-196 (EFEKRAQRMKEKLTKGDDDSSKPIT).

This Bos taurus (Bovine) protein is GPALPP motifs-containing protein 1 (GPALPP1).